A 915-amino-acid chain; its full sequence is Mitogen-activated protein kinase kinae kinase MST11 (915 aa).

Disordered regions lie at residues 1–65 (MAML…PKHW), 134–171 (KKRN…NPSV), and 183–249 (GMAY…TRTD). The span at 26–45 (AQASYPPSRRAPAVPPASQS) shows a compositional bias: low complexity. The 64-residue stretch at 65 to 128 (WDEDKVCEYL…FLSIKKLRTK (64 aa)) folds into the SAM domain. 2 stretches are compositionally biased toward low complexity: residues 152–163 (SESPSKPFHSSS) and 188–203 (PSRP…PLPS). A Ras-associating domain is found at 263-353 (NQDVIRVIST…NRLILRRVPA (91 aa)). A Protein kinase domain is found at 641 to 911 (WMKGALIGQG…ADDLMLSPFL (271 aa)). ATP contacts are provided by residues 647–655 (IGQGSFGCV) and lysine 670.

It belongs to the protein kinase superfamily. STE Ser/Thr protein kinase family. MAP kinase kinase kinase subfamily. In terms of assembly, interacts with the adapter protein MST50.

The enzyme catalyses L-seryl-[protein] + ATP = O-phospho-L-seryl-[protein] + ADP + H(+). It catalyses the reaction L-threonyl-[protein] + ATP = O-phospho-L-threonyl-[protein] + ADP + H(+). Its function is as follows. Mitogen-activated protein kinase kinase kinase; part of the MST11-MST7-PMK1 MAP kinase (MAPK) cascade that is essential for appressorium formation, penetration and invasive growth. The MST11-MST7-PMK1 MAP kinase cascade transduces signals from the cell surface sensors MDB2 and SHO1 that recognize various surface signals such as surface hydrophobicity, cutin monomers, and rice leaf waxes. MST11 acts as the upstream MAPKKK that directly phosphorylates MAPKK MST7. MST11 but not MST7 may also be involved in the OSM1 MAPK pathway in response to osmotic stresses. The polypeptide is Mitogen-activated protein kinase kinae kinase MST11 (Pyricularia oryzae (strain 70-15 / ATCC MYA-4617 / FGSC 8958) (Rice blast fungus)).